The sequence spans 1013 residues: Sodium/potassium-transporting ATPase subunit alpha-3 (1013 aa).

The segment at 1-24 (MGDKKDDKDSPKKNKGKERRDLDD) is disordered. The Cytoplasmic segment spans residues 1–77 (MGDKKDDKDS…NALTPPPTTP (77 aa)). A phosphoserine mark is found at S37 and S56. The segment at 72–74 (PPP) is interaction with phosphoinositide-3 kinase. The helical transmembrane segment at 78–98 (EWVKFCRQLFGGFSILLWIGA) threads the bilayer. The Extracellular portion of the chain corresponds to 99–121 (ILCFLAYGIQAGTEDDPSGDNLY). A helical membrane pass occupies residues 122–142 (LGIVLAAVVIITGCFSYYQEA). The Cytoplasmic segment spans residues 143 to 278 (KSSKIMESFK…VGKTPIAIEI (136 aa)). Phosphoserine occurs at positions 218 and 265. A helical membrane pass occupies residues 279-298 (EHFIQLITGVAVFLGVSFFI). The Extracellular portion of the chain corresponds to 299–310 (LSLILGYTWLEA). A helical transmembrane segment spans residues 311 to 328 (VIFLIGIIVANVPEGLLA). Topologically, residues 329–762 (TVTVCLTLTA…EEGRLIFDNL (434 aa)) are cytoplasmic. D366 (4-aspartylphosphate intermediate) is an active-site residue. At S442 the chain carries Phosphoserine. Y548 carries the phosphotyrosine modification. Mg(2+) contacts are provided by D707 and D711. A helical membrane pass occupies residues 763–782 (KKSIAYTLTSNIPEITPFLL). The Extracellular segment spans residues 783-792 (FIMANIPLPL). The helical transmembrane segment at 793–813 (GTITILCIDLGTDMVPAISLA) threads the bilayer. Residues 814-833 (YEAAESDIMKRQPRNPRTDK) lie on the Cytoplasmic side of the membrane. A helical transmembrane segment spans residues 834-856 (LVNERLISMAYGQIGMIQALGGF). Over 857–908 (FSYFVILAENGFLPGNLVGIRLNWDDRTVNDLEDSYGQQWTYEQRKVVEFTC) the chain is Extracellular. The helical transmembrane segment at 909–928 (HTAFFVSIVVVQWADLIICK) threads the bilayer. Residues 929–941 (TRRNSVFQQGMKN) lie on the Cytoplasmic side of the membrane. S933 carries the phosphoserine; by PKA modification. Residues 942-960 (KILIFGLFEETALAAFLSY) traverse the membrane as a helical segment. Topologically, residues 961 to 975 (CPGMDVALRMYPLKP) are extracellular. The helical transmembrane segment at 976-996 (SWWFCAFPYSFLIFVYDEIRK) threads the bilayer. Residues 997 to 1013 (LILRRNPGGWVEKETYY) are Cytoplasmic-facing.

The protein belongs to the cation transport ATPase (P-type) (TC 3.A.3) family. Type IIC subfamily. As to quaternary structure, the sodium/potassium-transporting ATPase is composed of a catalytic alpha subunit, an auxiliary non-catalytic beta subunit and an additional regulatory subunit. Interacts with regulatory subunit FXYD1.

It is found in the cell membrane. It carries out the reaction K(+)(out) + Na(+)(in) + ATP + H2O = K(+)(in) + Na(+)(out) + ADP + phosphate + H(+). Its function is as follows. This is the catalytic component of the active enzyme, which catalyzes the hydrolysis of ATP coupled with the exchange of sodium and potassium ions across the plasma membrane. This action creates the electrochemical gradient of sodium and potassium ions, providing the energy for active transport of various nutrients. In Homo sapiens (Human), this protein is Sodium/potassium-transporting ATPase subunit alpha-3 (ATP1A3).